Reading from the N-terminus, the 203-residue chain is dITP/XTP pyrophosphatase (203 aa).

8-13 (TANKGK) is a substrate binding site. 2 residues coordinate Mg(2+): E41 and D70. Catalysis depends on D70, which acts as the Proton acceptor. Residues S71, 153–156 (FGYD), K176, and 181–182 (HR) contribute to the substrate site.

Belongs to the HAM1 NTPase family. In terms of assembly, homodimer. Requires Mg(2+) as cofactor.

It carries out the reaction XTP + H2O = XMP + diphosphate + H(+). The catalysed reaction is dITP + H2O = dIMP + diphosphate + H(+). It catalyses the reaction ITP + H2O = IMP + diphosphate + H(+). Its function is as follows. Pyrophosphatase that catalyzes the hydrolysis of nucleoside triphosphates to their monophosphate derivatives, with a high preference for the non-canonical purine nucleotides XTP (xanthosine triphosphate), dITP (deoxyinosine triphosphate) and ITP. Seems to function as a house-cleaning enzyme that removes non-canonical purine nucleotides from the nucleotide pool, thus preventing their incorporation into DNA/RNA and avoiding chromosomal lesions. In Listeria monocytogenes serovar 1/2a (strain ATCC BAA-679 / EGD-e), this protein is dITP/XTP pyrophosphatase.